The following is a 264-amino-acid chain: S-adenosylmethionine decarboxylase proenzyme (264 aa).

The Schiff-base intermediate with substrate; via pyruvic acid role is filled by S112. Residue S112 is modified to Pyruvic acid (Ser); by autocatalysis. H117 serves as the catalytic Proton acceptor; for processing activity. Residue C140 is the Proton donor; for catalytic activity of the active site.

The protein belongs to the prokaryotic AdoMetDC family. Type 2 subfamily. Heterooctamer of four alpha and four beta chains arranged as a tetramer of alpha/beta heterodimers. The cofactor is pyruvate. Post-translationally, is synthesized initially as an inactive proenzyme. Formation of the active enzyme involves a self-maturation process in which the active site pyruvoyl group is generated from an internal serine residue via an autocatalytic post-translational modification. Two non-identical subunits are generated from the proenzyme in this reaction, and the pyruvate is formed at the N-terminus of the alpha chain, which is derived from the carboxyl end of the proenzyme. The post-translation cleavage follows an unusual pathway, termed non-hydrolytic serinolysis, in which the side chain hydroxyl group of the serine supplies its oxygen atom to form the C-terminus of the beta chain, while the remainder of the serine residue undergoes an oxidative deamination to produce ammonia and the pyruvoyl group blocking the N-terminus of the alpha chain.

The enzyme catalyses S-adenosyl-L-methionine + H(+) = S-adenosyl 3-(methylsulfanyl)propylamine + CO2. Its pathway is amine and polyamine biosynthesis; S-adenosylmethioninamine biosynthesis; S-adenosylmethioninamine from S-adenosyl-L-methionine: step 1/1. Functionally, catalyzes the decarboxylation of S-adenosylmethionine to S-adenosylmethioninamine (dcAdoMet), the propylamine donor required for the synthesis of the polyamines spermine and spermidine from the diamine putrescine. The protein is S-adenosylmethionine decarboxylase proenzyme of Klebsiella pneumoniae subsp. pneumoniae (strain ATCC 700721 / MGH 78578).